The following is a 337-amino-acid chain: Protein AMBP (337 aa).

The signal sequence occupies residues 1–4; sequence AVSA. 3-hydroxy-L-kynurenine-binding residues include C38 and K96. A disulfide bridge links C76 with C173. A glycan (N-linked (GlcNAc...) asparagine) is linked at N100. Residues K122 and K134 each contribute to the 3-hydroxy-L-kynurenine site. O-linked (Xyl...) (chondroitin sulfate) serine glycosylation occurs at S200. Disulfide bonds link C216/C266, C225/C249, C241/C262, C272/C322, C281/C305, and C297/C318. BPTI/Kunitz inhibitor domains are found at residues 216–266 and 272–322; these read CQLG…LQTC and CSLP…KEYC. N-linked (GlcNAc...) asparagine glycosylation is present at N235.

The protein in the N-terminal section; belongs to the calycin superfamily. Lipocalin family. As to quaternary structure, monomer. Homodimer. In plasma, it occurs as a monomer or dimer and in covalently-linked complexes with immunoglobulin A (IgA), ALB/albumin and F2/prothrombin. Chromophore-bound alpha-1-microglobulin interacts with the constant region of immunoglobulin A. Chromophore-bound alpha-1-microglobulin interacts with ALB with molar ratio 2:1 and 1:1; this interaction does not prevent fatty acid binding to ALB. Interacts with F2/prothrombin (via N-terminus) with molar ratio 2:1 and 1:1; this interaction does not prevent the activation of prothrombin to thrombin. Interacts with NDUFAB1, a subunit of mitochondrial complex I. Interacts with FN1. In terms of assembly, I-alpha-I plasma protease inhibitors are assembled from one or two heavy chains (HC) and one light chain, bikunin. Inter-alpha-inhibitor (I-alpha-I) is composed of ITIH1/HC1, ITIH2/HC2 and bikunin, and pre-alpha-inhibitor (P-alpha-I) of ITIH3/HC3 and bikunin. Interacts with TNFAIP6 (via Link domain). Monomer. Also occurs as a complex with tryptase in mast cells. The precursor is proteolytically processed into separately functioning proteins. Post-translationally, proteolytically cleaved in the presence of oxyhemoglobin or MPO. In terms of processing, 3-hydroxykynurenine, an oxidized tryptophan metabolite that is common in biological fluids, reacts with Cys-53, Lys-111, Lys-137, and Lys-149 to form heterogeneous polycyclic chromophores including hydroxanthommatin. The reaction by alpha-1-microglobulin is autocatalytic; the human protein forms chromophore even when expressed in insect and bacterial cells. The chromophore can react with accessible cysteines forming non-reducible thioether cross-links with other molecules of alpha-1-microglobulin or with other proteins such as Ig alpha-1 chain C region 'Cys-352'. Heavy chains are interlinked with bikunin via a chondroitin 4-sulfate bridge to the C-terminal aspartate. Post-translationally, proteolytically cleaved by PRSS3 at Kunitz domain 2. In terms of tissue distribution, expressed by the liver and secreted in plasma.

It localises to the secreted. The protein resides in the endoplasmic reticulum. Its subcellular location is the cytoplasm. The protein localises to the cytosol. It is found in the cell membrane. It localises to the nucleus membrane. The protein resides in the mitochondrion inner membrane. Its subcellular location is the extracellular space. The protein localises to the extracellular matrix. Functionally, antioxidant and tissue repair protein with reductase, heme-binding and radical-scavenging activities. Removes and protects against harmful oxidants and repairs macromolecules in intravascular and extravascular spaces and in intracellular compartments. Intravascularly, plays a regulatory role in red cell homeostasis by preventing heme- and reactive oxygen species-induced cell damage. Binds and degrades free heme to protect fetal and adult red blood cells from hemolysis. Reduces extracellular methemoglobin, a Fe3+ (ferric) form of hemoglobin that cannot bind oxygen, back to the Fe2+ (ferrous) form deoxyhemoglobin, which has oxygen-carrying potential. Upon acute inflammation, inhibits oxidation of low-density lipoprotein particles by MPO and limits vascular damage. Extravascularly, protects from oxidation products formed on extracellular matrix structures and cell membranes. Catalyzes the reduction of carbonyl groups on oxidized collagen fibers and preserves cellular and extracellular matrix ultrastructures. Importantly, counteracts the oxidative damage at blood-placenta interface, preventing leakage of free fetal hemoglobin into the maternal circulation. Intracellularly, has a role in maintaining mitochondrial redox homeostasis. Bound to complex I of the respiratory chain of mitochondria, may scavenge free radicals and preserve mitochondrial ATP synthesis. Protects renal tubule epithelial cells from heme-induced oxidative damage to mitochondria. Reduces cytochrome c from Fe3+ (ferric) to the Fe2+ (ferrous) state through formation of superoxide anion radicals in the presence of ascorbate or NADH/NADPH electron donor cofactors, ascorbate being the preferred cofactor. Has a chaperone role in facilitating the correct folding of bikunin in the endoplasmic reticulum compartment. In terms of biological role, kunitz-type serine protease inhibitor and structural component of extracellular matrix with a role in extracellular space remodeling and cell adhesion. Among others, has antiprotease activity toward kallikrein, a protease involved in airway inflammation; inhibits GZMK/granzyme, a granule-stored serine protease involved in NK and T cell cytotoxic responses; and inhibits PLG/plasmin, a protease required for activation of matrix metalloproteinases. As part of I-alpha-I complex, provides for the heavy chains to be transferred from I-alpha-I complex to hyaluronan in the presence of TNFAIP6, in a dynamic process that releases free bikunin and remodels extracellular matrix proteoglycan structures. Free bikunin, but not its heavy chain-bound form, acts as a potent protease inhibitor in airway secretions. Part of hyaluronan-rich extracellular matrix that surrounds oocyte during cumulus oophorus expansion, an indispensable process for proper ovulation. Also inhibits calcium oxalate crystallization. Its function is as follows. Kunitz-type serine protease inhibitor. Has high catalytic efficiency for F10/blood coagulation factor Xa and may act as an anticoagulant by inhibiting prothrombin activation. Inhibits trypsin and mast cell CMA1/chymase and tryptase proteases. This chain is Protein AMBP (AMBP), found in Sus scrofa (Pig).